Consider the following 92-residue polypeptide: Kinetoplastid membrane protein 11 (92 aa).

The protein belongs to the KMP-11 family. As to quaternary structure, monomer.

It localises to the cytoplasm. The protein localises to the cytoskeleton. May be involved in the regulation of the cytoskeleton through interaction with the subpellicular microtubules. May be involved in parasite mobility and attachment to the surface of the host cell. Behaves as a strong immunogen during infection. This Trypanosoma brucei brucei protein is Kinetoplastid membrane protein 11 (KMP-11/1).